Here is a 787-residue protein sequence, read N- to C-terminus: Disease resistance protein ADR1 (787 aa).

Residues 1–149 (MASFIDLFAG…LLTERNDSLS (149 aa)) form the RPW8 domain. A coiled-coil region spans residues 96-112 (HANKMKDLEKQISRFLN). 193 to 200 (GMSGSGKT) serves as a coordination point for ATP. The 168-residue stretch at 247-414 (HQRKLVILDD…PLDLLTSVWV (168 aa)) folds into the NB-ARC domain. LRR repeat units follow at residues 549 to 575 (MSRLRVLVIINNGMSPARLHGFSIFAN), 576 to 599 (LAKLRSLWLKRVHVPELTSCTIPL), 650 to 674 (ITSLNSLSITNCPRILELPKNLSNV), and 722 to 745 (LGSLEKIDMRECSLLGLPSSVAAL).

The protein belongs to the disease resistance NB-LRR family.

Its function is as follows. Disease resistance (R) protein that mediates resistance against Hyaloperonospora parasitica in a salicylic acid-dependent manner. Also mediates resistance against Erysiphe cichoracearum is both salicylic acid-dependent and partially NPR1-dependent. Resistance proteins guard the plant against pathogens that contain an appropriate avirulence protein via an indirect interaction with this avirulence protein. That triggers a defense system including the hypersensitive response, which restricts the pathogen growth. The chain is Disease resistance protein ADR1 (ADR1) from Arabidopsis thaliana (Mouse-ear cress).